The sequence spans 295 residues: MEHQLLCCEVETIRRAYPDTNLLNDRVLRAMLKTEETCAPSVSYFKCVQREIVPSMRKIVATWMLEVCEEQKCEEEVFPLAMNYLDRFLSLEPLKKSRLQLLGATCMFVASKMKETIPLTAEKLCIYTDNSIRPEELLQMELLLVNKLKWNLAAMTPHDFIEHFLSKMPEADENKQIIRKHAQTFVALCATDVKFISNPPSMVAAGSVVAAMQGLNLGSPNNFLSCYRTTHFLSRVIKCDPDCLRACQEQIEALLESSLRQAQQNIDPKATEEEGEVEEEAGLACTPTDVRDVDI.

The region spanning L28–L152 is the Cyclin N-terminal domain. Residue K269 forms a Glycyl lysine isopeptide (Lys-Gly) (interchain with G-Cter in ubiquitin) linkage. The disordered stretch occupies residues K269–I295. T286 is modified (phosphothreonine).

Belongs to the cyclin family. Cyclin D subfamily. In terms of assembly, interacts with either CDK4 or CDK6 protein kinase to form a serine/threonine kinase holoenzyme complex. The cyclin subunit imparts substrate specificity to the complex. Component of the ternary complex CCND1/CDK4/CDKN1B required for nuclear translocation and modulation of CDK4-mediated kinase activity. Interacts directly with CDKN1B. Can form similar complexes with either CDKN1A or CDKN2A. Interacts with UHRF2; the interaction ubiquitinates CCND1 and appears to occur independently of phosphorylation. Interacts with USP2. Interacts (via cyclin N-terminal domain) with INSM1 (via N-terminal region); the interaction competes with the binding of CCND1 to CDK4 during cell cycle progression and inhibits CDK4 activity. Interacts with CDK4; the interaction is prevented with the binding of CCND1 to INSM1 during cell cycle progression. In terms of processing, phosphorylation at Thr-286 by MAP kinases is required for ubiquitination and degradation by the DCX(AMBRA1) complex. It also plays an essential role for recognition by the FBXO31 component of SCF (SKP1-cullin-F-box) protein ligase complex following DNA damage. Post-translationally, ubiquitinated at Lys-269 by the DCX(AMBRA1) complex during the transition from G1 to S cell phase, leading to its degradation: ubiquitination is dependent on Thr-286 phosphorylation. The DCX(AMBRA1) complex represents the major regulator of CCND1 stability during the G1/S transition. Also ubiquitinated by the SCF(FBXO4) and Cul7-RING(FBXW8) ubiquitin-protein ligase complexes. Following DNA damage it is ubiquitinated by the SCF(FBXO31) protein ligase complex. SCF(FBXO31) ubiquitination is dependent on Thr-286 phosphorylation. Ubiquitinated also by UHRF2 apparently in a phosphorylation-independent manner. Ubiquitination leads to its degradation and G1 arrest. Deubiquitinated by USP2; leading to its stabilization.

The protein localises to the nucleus. The protein resides in the cytoplasm. It localises to the nucleus membrane. In terms of biological role, regulatory component of the cyclin D1-CDK4 (DC) complex that phosphorylates and inhibits members of the retinoblastoma (RB) protein family including RB1 and regulates the cell-cycle during G(1)/S transition. Phosphorylation of RB1 allows dissociation of the transcription factor E2F from the RB/E2F complex and the subsequent transcription of E2F target genes which are responsible for the progression through the G(1) phase. Hypophosphorylates RB1 in early G(1) phase. Cyclin D-CDK4 complexes are major integrators of various mitogenenic and antimitogenic signals. Also a substrate for SMAD3, phosphorylating SMAD3 in a cell-cycle-dependent manner and repressing its transcriptional activity. Component of the ternary complex, cyclin D1/CDK4/CDKN1B, required for nuclear translocation and activity of the cyclin D-CDK4 complex. Exhibits transcriptional corepressor activity with INSM1 on the NEUROD1 and INS promoters in a cell cycle-independent manner. The polypeptide is G1/S-specific cyclin-D1 (Ccnd1) (Rattus norvegicus (Rat)).